A 630-amino-acid chain; its full sequence is Sodium-dependent serotonin transporter (630 aa).

Topologically, residues 1-87 are cytoplasmic; that stretch reads METTPLNSQK…ERETWGKKMD (87 aa). Residues 23–60 are disordered; sequence ENGVLQKGVPTTADRAEPSQISNGYSAVPSTSAGDEAS. Positions 41–55 are enriched in polar residues; it reads SQISNGYSAVPSTSA. Tyrosine 47 carries the phosphotyrosine modification. A helical membrane pass occupies residues 88–112; the sequence is FLLSVIGYAVDLGNIWRFPYICYQN. Na(+) is bound by residues glycine 94, alanine 96, valine 97, aspartate 98, and asparagine 101. Residue aspartate 98 participates in serotonin binding. Topologically, residues 113 to 115 are extracellular; it reads GGG. The helical transmembrane segment at 116-135 threads the bilayer; sequence AFLLPYTIMAIFGGIPLFYM. Residues 136-160 are Cytoplasmic-facing; sequence ELALGQYHRNGCISIWRKICPIFKG. Tyrosine 142 carries the post-translational modification Phosphotyrosine. The chain crosses the membrane as a helical span at residues 161 to 186; it reads IGYAICIIAFYIASYYNTIIAWALYY. Residues 187-252 lie on the Extracellular side of the membrane; that stretch reads LISSLTDRLP…KGLQDLGTIS (66 aa). Cysteines 200 and 209 form a disulfide. Residues asparagine 208 and asparagine 217 are each glycosylated (N-linked (GlcNAc...) asparagine). A helical membrane pass occupies residues 253–271; the sequence is WQLTLCIVLIFTVIYFSIW. Residues 272-277 are Cytoplasmic-facing; the sequence is KGVKTS. Phosphothreonine is present on threonine 276. The helical transmembrane segment at 278–297 threads the bilayer; that stretch reads GKVVWVTATFPYIVLSVLLV. Residues 298–324 lie on the Extracellular side of the membrane; sequence RGATLPGAWRGVVFYLKPNWQKLLETG. Residues 325-347 traverse the membrane as a helical segment; it reads VWVDAAAQIFFSLGPGFGVLLAF. Position 336 (serine 336) interacts with Na(+). Topologically, residues 348–360 are cytoplasmic; the sequence is ASYNKFNNNCYQD. The helical transmembrane segment at 361–380 threads the bilayer; the sequence is ALVTSVVNCMTSFVSGFVIF. Na(+) is bound at residue asparagine 368. Topologically, residues 381–421 are extracellular; sequence TVLGYMAEMRNEDVSEVAKDAGPSLLFITYAEAIANMPAST. The helical transmembrane segment at 422–443 threads the bilayer; sequence FFAIIFFLMLITLGLDSTFAGL. Na(+) contacts are provided by leucine 434, aspartate 437, and serine 438. Serotonin is bound at residue threonine 439. Over 444–463 the chain is Cytoplasmic; sequence EGVITAVLDEFPHIWAKRRE. A helical transmembrane segment spans residues 464 to 483; sequence WFVLIVVITCVLGSLLTLTS. The Extracellular segment spans residues 484–494; the sequence is GGAYVVTLLEE. Glutamate 494 and tyrosine 495 together coordinate serotonin. A helical transmembrane segment spans residues 495 to 516; it reads YATGPAVLTVALIEAVAVSWFY. Topologically, residues 517 to 538 are cytoplasmic; the sequence is GITQFCSDVKEMLGFSPGWFWR. Residues 539–558 form a helical membrane-spanning segment; that stretch reads ICWVAISPLFLLFIICSFLM. Positions 556 and 559 each coordinate serotonin. The Extracellular portion of the chain corresponds to 559 to 574; sequence SPPQLRLFQYNYPHWS. A helical transmembrane segment spans residues 575–595; sequence IVLGYCIGMSSVICIPTYIIY. Residues 596–630 lie on the Cytoplasmic side of the membrane; the sequence is RLISTPGTLKERIIKSITPETPTEIPCGDIRMNAV. Positions 616–624 are interaction with RAB4A; it reads TPTEIPCGD.

This sequence belongs to the sodium:neurotransmitter symporter (SNF) (TC 2.A.22) family. SLC6A4 subfamily. In terms of assembly, monomer or homooligomer. Interacts with TGFB1I1. Interacts with SEC23A, SEC24C and PATJ. Interacts with NOS1; the interaction may diminish the cell surface localization of SERT in the brain and, correspondingly, reduce serotonin reuptake. Interacts (via C-terminus) with SCAMP2; the interaction is direct and retains transporter molecules intracellularly. Interacts with filamentous actin and STX1A. Interacts (via the N-terminus) with STX1A (via the H3 domain); this interaction regulates SLC4A6 channel conductance. Interacts with ITGAV:ITGB3. Interacts (via C-terminus) with ITGB3; this interaction regulates SLC6A4 trafficking. Post-translationally, phosphorylation at Thr-276 increases 5-HT uptake and is required for cGMP-mediated SERT regulation. In terms of tissue distribution, expressed in the intestinal crypt epithelial cells and myenteric neurons of the small intestine (at protein level). Expressed in the brain.

It is found in the cell membrane. Its subcellular location is the endomembrane system. It localises to the endosome membrane. The protein localises to the synapse. The protein resides in the cell junction. It is found in the focal adhesion. Its subcellular location is the cell projection. It localises to the neuron projection. The enzyme catalyses serotonin(out) + K(+)(in) + Na(+)(out) + H(+)(in) = serotonin(in) + K(+)(out) + Na(+)(in) + H(+)(out). Functionally, serotonin transporter that cotransports serotonin with one Na(+) ion in exchange for one K(+) ion and possibly one proton in an overall electroneutral transport cycle. Transports serotonin across the plasma membrane from the extracellular compartment to the cytosol thus limiting serotonin intercellular signaling. Essential for serotonin homeostasis in the central nervous system. In the developing somatosensory cortex, acts in glutamatergic neurons to control serotonin uptake and its trophic functions accounting for proper spatial organization of cortical neurons and elaboration of sensory circuits. In the mature cortex, acts primarily in brainstem raphe neurons to mediate serotonin uptake from the synaptic cleft back into the pre-synaptic terminal thus terminating serotonin signaling at the synapse. Modulates mucosal serotonin levels in the gastrointestinal tract through uptake and clearance of serotonin in enterocytes. Required for enteric neurogenesis and gastrointestinal reflexes. Regulates blood serotonin levels by ensuring rapid high affinity uptake of serotonin from plasma to platelets, where it is further stored in dense granules via vesicular monoamine transporters and then released upon stimulation. Mechanistically, the transport cycle starts with an outward-open conformation having Na1(+) and Cl(-) sites occupied. The binding of a second extracellular Na2(+) ion and serotonin substrate leads to structural changes to outward-occluded to inward-occluded to inward-open, where the Na2(+) ion and serotonin are released into the cytosol. Binding of intracellular K(+) ion induces conformational transitions to inward-occluded to outward-open and completes the cycle by releasing K(+) possibly together with a proton bound to Asp-98 into the extracellular compartment. Na1(+) and Cl(-) ions remain bound throughout the transport cycle. Additionally, displays serotonin-induced channel-like conductance for monovalent cations, mainly Na(+) ions. The channel activity is uncoupled from the transport cycle and may contribute to the membrane resting potential or excitability. This is Sodium-dependent serotonin transporter (Slc6a4) from Rattus norvegicus (Rat).